Here is a 202-residue protein sequence, read N- to C-terminus: Probable GTP-binding protein EngB (202 aa).

The EngB-type G domain maps to 22–197 (VFPEYAFIGR…LDYIENISKE (176 aa)). Residues 30–37 (GRSNVGKS), 57–61 (GKTML), 75–78 (DLPG), 142–145 (TKAD), and 173–178 (YFISSS) contribute to the GTP site. The Mg(2+) site is built by serine 37 and threonine 59.

It belongs to the TRAFAC class TrmE-Era-EngA-EngB-Septin-like GTPase superfamily. EngB GTPase family. Requires Mg(2+) as cofactor.

Necessary for normal cell division and for the maintenance of normal septation. This is Probable GTP-binding protein EngB from Bacteroides thetaiotaomicron (strain ATCC 29148 / DSM 2079 / JCM 5827 / CCUG 10774 / NCTC 10582 / VPI-5482 / E50).